The chain runs to 279 residues: NAD kinase (279 aa).

Residue aspartate 57 is the Proton acceptor of the active site. NAD(+) is bound by residues 57–58 (DG), 133–134 (NE), arginine 159, aspartate 161, and 172–177 (TAYNKS).

It belongs to the NAD kinase family. It depends on a divalent metal cation as a cofactor.

The protein localises to the cytoplasm. It carries out the reaction NAD(+) + ATP = ADP + NADP(+) + H(+). Functionally, involved in the regulation of the intracellular balance of NAD and NADP, and is a key enzyme in the biosynthesis of NADP. Catalyzes specifically the phosphorylation on 2'-hydroxyl of the adenosine moiety of NAD to yield NADP. This is NAD kinase from Streptococcus pyogenes serotype M12 (strain MGAS2096).